Reading from the N-terminus, the 256-residue chain is POU domain class 2-associating factor 1 (256 aa).

The tract at residues 1 to 23 (MLWQKPTAPEQAPAPPRPYQGVR) is disordered. The OCA domain maps to 16–38 (PRPYQGVRVKEPVKELLRRKRGH).

The protein belongs to the POU2AF family. As to quaternary structure, interacts with POU2F1/OCT1 and POU2F2/OCT2; the interaction increases POU2F1 and POU2F2 transactivation activity. Ubiquitinated; mediated by SIAH1 or SIAH2 and leading to its subsequent proteasomal degradation.

The protein resides in the nucleus. In terms of biological role, transcriptional coactivator that specifically associates with either POU2F1/OCT1 or POU2F2/OCT2. It boosts the POU2F1/OCT1 mediated promoter activity and to a lesser extent, that of POU2F2/OCT2. It recognizes the POU domains of POU2F1/OCT1 and POU2F2/OCT2. It is essential for the response of B-cells to antigens and required for the formation of germinal centers. Regulates IL6 expression in B cells as POU2F2/OCT2 coactivator. The polypeptide is POU domain class 2-associating factor 1 (POU2AF1) (Bos taurus (Bovine)).